A 459-amino-acid polypeptide reads, in one-letter code: Autophagy-related protein 18 (459 aa).

2 WD repeats span residues 1–39 (MTSP…RIFS) and 188–228 (AHRS…KLYQ). The necessary for proper localization to vacuole membrane stretch occupies residues 229–232 (FRRG). Positions 229-233 (FRRGT) match the L/FRRG motif motif. Residues 233–272 (TYPSTIYSMSFNLSSTLLCVSSTSDTIHIFRLGAPPGNTT) form a WD 3 repeat. Residues 264-339 (LGAPPGNTTP…RGSGSFSSML (76 aa)) form a disordered region. The span at 265–277 (GAPPGNTTPAGAP) shows a compositional bias: low complexity. A compositionally biased stretch (basic and acidic residues) spans 285–296 (RQDRWSRARSYD). The span at 319–330 (PGAGNNQGGHTR) shows a compositional bias: gly residues. The WD 4 repeat unit spans residues 393 to 433 (APGGPLRSVVAMSSSSPQVMVVTSDGGFYVYNIDMEHGGEG).

Belongs to the WD repeat PROPPIN family. Component of the PI(3,5)P2 regulatory complex. Interacts with ATG2 and ATG9. The ATG2-ATG18 complex is essential for autophagosome formation.

Its subcellular location is the preautophagosomal structure membrane. It localises to the vacuole membrane. It is found in the endosome membrane. Its function is as follows. Component of the PI(3,5)P2 regulatory complex that regulates both the synthesis and turnover of phosphatidylinositol 3,5-bisphosphate (PtdIns(3,5)P2). Plays an important role in osmotically-induced vacuole fragmentation. Required for cytoplasm to vacuole transport (Cvt) vesicle formation, pexophagy and starvation-induced autophagy. Involved in correct ATG9 trafficking to the pre-autophagosomal structure. With ATG2, protects ATG8 from ATG4-mediated cleavage. Autophagy is required for proper vegetative growth, asexual/sexual reproduction, and full virulence. Autophagy is particularly involved in the biosynthesis of deoxynivalenol (DON), an important virulence determinant. This Gibberella zeae (strain ATCC MYA-4620 / CBS 123657 / FGSC 9075 / NRRL 31084 / PH-1) (Wheat head blight fungus) protein is Autophagy-related protein 18.